The sequence spans 378 residues: Pyrimidine monooxygenase RutA (378 aa).

Residues 65-66 (IK), Asn-131, Glu-140, 156-157 (RY), and Ser-206 contribute to the FMN site.

Belongs to the NtaA/SnaA/DszA monooxygenase family. RutA subfamily.

The enzyme catalyses uracil + FMNH2 + NADH + O2 = (Z)-3-ureidoacrylate + FMN + NAD(+) + H2O + H(+). It carries out the reaction thymine + FMNH2 + NADH + O2 = (Z)-2-methylureidoacrylate + FMN + NAD(+) + H2O + H(+). In terms of biological role, catalyzes the pyrimidine ring opening between N-3 and C-4 by an unusual flavin hydroperoxide-catalyzed mechanism, adding oxygen atoms in the process to yield ureidoacrylate peracid, that immediately reacts with FMN forming ureidoacrylate and FMN-N(5)-oxide. The FMN-N(5)-oxide reacts spontaneously with NADH to produce FMN. Requires the flavin reductase RutF to regenerate FMN in vivo. The sequence is that of Pyrimidine monooxygenase RutA from Cronobacter turicensis (strain DSM 18703 / CCUG 55852 / LMG 23827 / z3032).